Here is a 216-residue protein sequence, read N- to C-terminus: Ribosome maturation factor RimP (216 aa).

It belongs to the RimP family.

It localises to the cytoplasm. Functionally, required for maturation of 30S ribosomal subunits. In Bartonella henselae (strain ATCC 49882 / DSM 28221 / CCUG 30454 / Houston 1) (Rochalimaea henselae), this protein is Ribosome maturation factor RimP.